The sequence spans 736 residues: Microtubule-associated protein mu-2 (736 aa).

This sequence belongs to the orthoreovirus mu-2 protein family. As to quaternary structure, interacts with protein mu-NS; in viral inclusions. Interacts with polymerase lambda-3; this interaction stimulates the ATPase activity of mu-2. A divalent metal cation is required as a cofactor.

It is found in the virion. The protein localises to the host cytoplasm. It localises to the host cytoskeleton. Its function is as follows. Minor inner capsid (core) component. Displays NTPase and RNA 5'-triphosphatase (RTPase) activities. ATP is the preferred substrate for hydrolysis. May function as a cofactor of polymerase lambda-3. Associates with microtubules and plays a role in the formation, structural organization and morphology of viral inclusions, where the assembly of cores and the replication of viral RNA occur. Together with mu-NS, recruits the other core proteins to these inclusions. The chain is Microtubule-associated protein mu-2 (M1) from Mammalia (T1L).